The following is a 116-amino-acid chain: Histone H2B (116 aa).

The segment covering 1 to 11 (TSGKAAKKAGK) has biased composition (basic residues). Positions 1–25 (TSGKAAKKAGKAQKSITKGDKKKRK) are disordered. Residues Lys4, Lys11, and Lys14 each carry the N6-acetyllysine modification. Ser103 carries an O-linked (GlcNAc) serine glycan. Lys111 is covalently cross-linked (Glycyl lysine isopeptide (Lys-Gly) (interchain with G-Cter in ubiquitin)).

As to quaternary structure, the nucleosome is a histone octamer containing two molecules each of H2A, H2B, H3 and H4 assembled in one H3-H4 heterotetramer and two H2A-H2B heterodimers. The octamer wraps approximately 147 bp of DNA. In terms of processing, monoubiquitination gives a specific tag for epigenetic transcriptional activation and is also prerequisite for histone H3 'Lys-4' and 'Lys-79' methylation. GlcNAcylation at Ser-103 promotes monoubiquitination of Lys-111. It fluctuates in response to extracellular glucose, and associates with transcribed genes.

It localises to the nucleus. It is found in the chromosome. Functionally, core component of nucleosome. Nucleosomes wrap and compact DNA into chromatin, limiting DNA accessibility to the cellular machineries which require DNA as a template. Histones thereby play a central role in transcription regulation, DNA repair, DNA replication and chromosomal stability. DNA accessibility is regulated via a complex set of post-translational modifications of histones, also called histone code, and nucleosome remodeling. A mixture of histones H2B and H4 has antimicrobial activity against the Gram-positive bacterium M.luteus. This Penaeus vannamei (Whiteleg shrimp) protein is Histone H2B.